The sequence spans 323 residues: tRNA U34 carboxymethyltransferase (323 aa).

Carboxy-S-adenosyl-L-methionine-binding positions include lysine 91, tryptophan 105, lysine 110, glycine 130, 152–154 (DPS), 181–182 (IE), methionine 196, tyrosine 200, and arginine 315.

The protein belongs to the class I-like SAM-binding methyltransferase superfamily. CmoB family. Homotetramer.

The catalysed reaction is carboxy-S-adenosyl-L-methionine + 5-hydroxyuridine(34) in tRNA = 5-carboxymethoxyuridine(34) in tRNA + S-adenosyl-L-homocysteine + H(+). Functionally, catalyzes carboxymethyl transfer from carboxy-S-adenosyl-L-methionine (Cx-SAM) to 5-hydroxyuridine (ho5U) to form 5-carboxymethoxyuridine (cmo5U) at position 34 in tRNAs. The protein is tRNA U34 carboxymethyltransferase of Vibrio vulnificus (strain CMCP6).